Here is a 215-residue protein sequence, read N- to C-terminus: Adenylate kinase (215 aa).

10 to 15 (GAGKGT) lines the ATP pocket. The segment at 30 to 59 (STGDMLRAAVKAGTELGLKAKSVMDAGNLV) is NMP. Residues Thr-31, Arg-36, 57-59 (NLV), 85-88 (GFPR), and Gln-92 each bind AMP. The LID stretch occupies residues 122-159 (GRRVHEGSGRIYHTIFNPPKVEGVDDVTGESLVQRKDD). Residues Arg-123 and 132–133 (IY) contribute to the ATP site. 2 residues coordinate AMP: Arg-156 and Arg-167. Gly-201 serves as a coordination point for ATP.

It belongs to the adenylate kinase family. As to quaternary structure, monomer.

The protein localises to the cytoplasm. The catalysed reaction is AMP + ATP = 2 ADP. It functions in the pathway purine metabolism; AMP biosynthesis via salvage pathway; AMP from ADP: step 1/1. Catalyzes the reversible transfer of the terminal phosphate group between ATP and AMP. Plays an important role in cellular energy homeostasis and in adenine nucleotide metabolism. This Pseudomonas syringae pv. tomato (strain ATCC BAA-871 / DC3000) protein is Adenylate kinase.